A 170-amino-acid polypeptide reads, in one-letter code: Fimbrial protein (170 aa).

The propeptide at 1 to 7 is leader sequence; sequence MNTLQKG. N-methylphenylalanine is present on phenylalanine 8. Residues 8–28 form a helical membrane-spanning segment; sequence FTLIELMIVIAIVGILAAVAL. An O-linked (Gal...) serine glycan is attached at serine 70. Serine 100 carries the post-translational modification O-(sn-1-glycerophosphoryl)serine. Cysteine 127 and cysteine 163 are oxidised to a cystine.

The protein belongs to the N-Me-Phe pilin family. In terms of assembly, the pili are polar flexible filaments of about 5.4 nanometers diameter and 2.5 micrometers average length; they consist of only a single polypeptide chain arranged in a helical configuration of five subunits per turn in the assembled pilus. O-linked glycan has been reported to consist either of the Gal(alpha1-3) GlcNAc disaccharide, or the Gal(beta 1-4) Gal(alpha 1-3) 2,4-diacetamido-2,4,6-trideoxyhexose trisaccharide.

Its subcellular location is the fimbrium. It localises to the membrane. In terms of biological role, major component of the type IV pilus (T4P) that plays a role in cellular adherence, microcolony formation as well as twitching motility. The polypeptide is Fimbrial protein (pilE) (Neisseria meningitidis serogroup B (strain ATCC BAA-335 / MC58)).